A 540-amino-acid chain; its full sequence is NEDD8-activating enzyme E1 regulatory subunit AXR1 (540 aa).

Belongs to the ubiquitin-activating E1 family. ULA1 subfamily. As to quaternary structure, heterodimer of ECR1 and AXR1. The complex binds to RUB1/NEDD8 and RCE1. Expressed in shoot, root and floral meristems, in vascular tissues of cotyledons and mature leaves, and in the stele of the root. Expressed at higher levels on the lower side of an emerging root during germination and at higher levels on the underside of the apical hook.

Its subcellular location is the nucleus. Its pathway is protein modification; protein neddylation. Functionally, regulatory subunit of the dimeric ECR1-AXR1 E1 enzyme. E1 activates RUB1/NEDD8 by first adenylating its C-terminal glycine residue with ATP, thereafter linking this residue to the side chain of the catalytic cysteine, yielding a RUB1-ECR1 thioester and free AMP. E1 finally transfers RUB1 to the catalytic cysteine of RCE1. Plays an important role in auxin response. Regulates the chromosomal localization of meiotic recombination by crossovers (COs) and subsequent synapsis, probably through the activation of a CRL4 complex. Required for E3-mediated protein degradation in response to auxin, jasmonic acid and cold stress. Required for the COP1-COP10-CSN-mediated repression of photomorphogenesis in the dark. May function redundantly with AXL1 in the RUB conjugating pathway. Seems not to be functionally equivalent to AXL1 in vivo. This chain is NEDD8-activating enzyme E1 regulatory subunit AXR1, found in Arabidopsis thaliana (Mouse-ear cress).